Consider the following 271-residue polypeptide: HTH-type transcriptional repressor AllR (271 aa).

One can recognise an HTH iclR-type domain in the interval 21 to 83 (AQALERGIAI…SQLGWWHIGL (63 aa)). A DNA-binding region (H-T-H motif) is located at residues 43-62 (VSDISLNLDLPLSTTFRLLK). Residues 98–267 (VLSVAGPFMR…ARDISTALGL (170 aa)) enclose the IclR-ED domain. Residues 154–156 (SGA), Asp207, Cys217, and 234–236 (SIS) each bind glyoxylate.

In terms of biological role, negative regulator of allantoin and glyoxylate utilization operons. Binds to the gcl promoter and to the allS-allA intergenic region. This Escherichia coli O6:H1 (strain CFT073 / ATCC 700928 / UPEC) protein is HTH-type transcriptional repressor AllR (allR).